The following is a 347-amino-acid chain: Probable RNA methyltransferase azo0122 (347 aa).

The active-site Proton acceptor is the E89. The Radical SAM core domain occupies 92-318 (LLLRDGLCVS…AKLRQSAGQD (227 aa)). An intrachain disulfide couples C99 to C323. The [4Fe-4S] cluster site is built by C106, C110, and C113. S-adenosyl-L-methionine contacts are provided by residues 151–152 (GE), S181, 204–206 (SLH), and N280. The active-site S-methylcysteine intermediate is the C323.

This sequence belongs to the radical SAM superfamily. RlmN family. [4Fe-4S] cluster is required as a cofactor.

It is found in the cytoplasm. The protein is Probable RNA methyltransferase azo0122 of Azoarcus sp. (strain BH72).